The primary structure comprises 91 residues: Small ribosomal subunit protein uS19 (91 aa).

It belongs to the universal ribosomal protein uS19 family.

In terms of biological role, protein S19 forms a complex with S13 that binds strongly to the 16S ribosomal RNA. The chain is Small ribosomal subunit protein uS19 from Aromatoleum aromaticum (strain DSM 19018 / LMG 30748 / EbN1) (Azoarcus sp. (strain EbN1)).